The primary structure comprises 212 residues: MPIREIRHPLIRHKLGLMRRADISTKNFRELAQEVGALLTYEATADLTLENYDIQGWAGTVSVEKIAGKKITVVPILRAGIGMLDGVLSLIPGAKVSAVGVARNEETLQAHTYLEKLVPEIDERLAMIIDPMLATGSSMVATIDLLKKAGCKEIRAMVLVAAPEGIAAVEKAHPDVMIYTASIDERLNEHGYIIPGLGDAGDKIFGTKQKDA.

Residues Arg78, Arg103, and 130–138 (DPMLATGSS) each bind 5-phospho-alpha-D-ribose 1-diphosphate. Uracil-binding positions include Ile193 and 198-200 (GDA). Asp199 is a binding site for 5-phospho-alpha-D-ribose 1-diphosphate.

It belongs to the UPRTase family. It depends on Mg(2+) as a cofactor.

The catalysed reaction is UMP + diphosphate = 5-phospho-alpha-D-ribose 1-diphosphate + uracil. It participates in pyrimidine metabolism; UMP biosynthesis via salvage pathway; UMP from uracil: step 1/1. Its activity is regulated as follows. Allosterically activated by GTP. Functionally, catalyzes the conversion of uracil and 5-phospho-alpha-D-ribose 1-diphosphate (PRPP) to UMP and diphosphate. This chain is Uracil phosphoribosyltransferase, found in Pseudomonas savastanoi pv. phaseolicola (strain 1448A / Race 6) (Pseudomonas syringae pv. phaseolicola (strain 1448A / Race 6)).